The primary structure comprises 384 residues: Sphingosine 1-phosphate receptor 3 (384 aa).

Residues 1 to 34 (MMINPLIYLHYNYTGKLDHRPTVGTSPGTRDPKT) lie on the Extracellular side of the membrane. N-linked (GlcNAc...) asparagine glycosylation is present at Asn-12. The chain crosses the membrane as a helical span at residues 35-55 (IAFLVVCSFIILENLTVLLAI). The Cytoplasmic segment spans residues 56–64 (WKNHRFHNR). The helical transmembrane segment at 65–85 (MYFFIGNLALCDLLASVAYLV) threads the bilayer. The Extracellular portion of the chain corresponds to 86–105 (NLLLSGEKTLQLSPVLWFVR). A helical membrane pass occupies residues 106-126 (EGSMFVTLGASIFSLLAIAIE). The Cytoplasmic portion of the chain corresponds to 127-144 (RHLTMIKMRPYDASKNYR). Residues 145 to 165 (VFLLIGTCWLVAVLLGALPIL) form a helical membrane-spanning segment. The Extracellular segment spans residues 166-186 (GWNCLGNLPDCSTILPLYTKK). The chain crosses the membrane as a helical span at residues 187–207 (YVAFCIIVFIVLLLAMSVLYA). At 208–235 (RIYILVKSSSQKVSKHRNSEHAMSLLRT) the chain is on the cytoplasmic side. Residues 236–256 (VIIVVGVFIACWMPIFVLLLL) traverse the membrane as a helical segment. Residues 257–271 (DVACERPCPILYKAD) lie on the Extracellular side of the membrane. Residues 272 to 292 (WFIAVAVLNSAMNPIIYTLAS) traverse the membrane as a helical segment. At 293-384 (REMRRAFLGL…REGEGGNGGR (92 aa)) the chain is on the cytoplasmic side. Composition is skewed to polar residues over residues 315–325 (NDSGNKQFQEP) and 336–347 (QTHPNQSQQSSR). The interval 315–384 (NDSGNKQFQE…REGEGGNGGR (70 aa)) is disordered. Basic and acidic residues predominate over residues 349-359 (AELDREQETGH).

Belongs to the G-protein coupled receptor 1 family.

The protein resides in the cell membrane. Receptor for the lysosphingolipid sphingosine 1-phosphate (S1P). This is Sphingosine 1-phosphate receptor 3 (s1pr3) from Takifugu rubripes (Japanese pufferfish).